Consider the following 356-residue polypeptide: Peptide chain release factor 1 (356 aa).

Position 234 is an N5-methylglutamine (Q234).

Belongs to the prokaryotic/mitochondrial release factor family. Methylated by PrmC. Methylation increases the termination efficiency of RF1.

The protein localises to the cytoplasm. Functionally, peptide chain release factor 1 directs the termination of translation in response to the peptide chain termination codons UAG and UAA. The chain is Peptide chain release factor 1 from Exiguobacterium sp. (strain ATCC BAA-1283 / AT1b).